We begin with the raw amino-acid sequence, 787 residues long: Transcriptional corepressor LEUNIG_HOMOLOG (787 aa).

The segment at 1 to 88 (MAQSNWEADK…IEAQQGKAKE (88 aa)) is required for SEU-binding. The 33-residue stretch at 8–40 (ADKMLDVYIYDYLVKKKLHNTAKSFMTEGKVSP) folds into the LisH domain. Residues 77-106 (AYIEAQQGKAKEQQMQIQQLQMMRQAQMQR) adopt a coiled-coil conformation. Residues 299–413 (NMTNSPMYGG…TPSTHTPVDG (115 aa)) form a disordered region. Low complexity-rich tracts occupy residues 336–346 (SIGSPMQSSSS) and 355–372 (QQSS…QSQQ). The span at 380 to 409 (PSSSGPANSTGTGNTVGPSNSQPSTPSTHT) shows a compositional bias: polar residues. WD repeat units follow at residues 508–547 (KSAS…VEST), 550–589 (EHAH…YFLR), 593–633 (GHAA…VRAV), 635–671 (GAST…KRVN), 675–715 (GHSS…HELS), 717–755 (SGNK…CMTV), and 757–787 (GHEC…KIWK).

Forms corepressor complexes with SLK1 and SLK2; LUH is the transcription repressor subunit and SLK1 and SLK2 the specific DNA-binding adapters. Interacts with SEU. Binds to YAB3, YAB5 and YAB1/FIL; these complexes promote adaxial cell identity in leaves as well as embryonic shoot apical meristem (SAM) initiation and postembryonic SAM maintenance. As to expression, expressed in roots, stems, leaves, seedlings, apex, flowers, siliques, flower organs and seeds (including seed coat).

The protein resides in the nucleus. Functionally, transcription repressor subunit of the SEU-SLK1 and SEU-SLK2 transcriptional corepressor of abiotic stress (e.g. salt and osmotic stress) response genes, by means of an epigenetic process involving histone modification (e.g. H3K9 and H3K14 acetylation), probably by recruiting HDAC, to facilitate the condensation of chromatin thus preventing transcription at the target genes. Can also act as a transcription activator. Implicated in embryo and floral development. Involved in post-synthesis cell wall modifications necessary for mucilage extrusion from seeds upon imbibition, probably by promoting the expression of genes required for mucilage maturation (e.g. MUM2). Regulates the maintenance on leaf polarity and meristem activity as well as the initiation of embryonic shoot apical meristem (SAM) development. This chain is Transcriptional corepressor LEUNIG_HOMOLOG, found in Arabidopsis thaliana (Mouse-ear cress).